A 599-amino-acid polypeptide reads, in one-letter code: Aspartate--tRNA(Asp/Asn) ligase (599 aa).

Glutamate 173 lines the L-aspartate pocket. Residues 197 to 200 (QLFK) form an aspartate region. Position 219 (arginine 219) interacts with L-aspartate. ATP-binding positions include 219 to 221 (RDE) and glutamine 228. Histidine 449 provides a ligand contact to L-aspartate. Residue glutamate 482 coordinates ATP. L-aspartate is bound at residue arginine 489. 534-537 (GLDR) serves as a coordination point for ATP.

It belongs to the class-II aminoacyl-tRNA synthetase family. Type 1 subfamily. In terms of assembly, homodimer.

The protein localises to the cytoplasm. The catalysed reaction is tRNA(Asx) + L-aspartate + ATP = L-aspartyl-tRNA(Asx) + AMP + diphosphate. In terms of biological role, aspartyl-tRNA synthetase with relaxed tRNA specificity since it is able to aspartylate not only its cognate tRNA(Asp) but also tRNA(Asn). Reaction proceeds in two steps: L-aspartate is first activated by ATP to form Asp-AMP and then transferred to the acceptor end of tRNA(Asp/Asn). In Marinobacter nauticus (strain ATCC 700491 / DSM 11845 / VT8) (Marinobacter aquaeolei), this protein is Aspartate--tRNA(Asp/Asn) ligase.